The chain runs to 267 residues: Undecaprenyl-diphosphatase (267 aa).

A run of 8 helical transmembrane segments spans residues 1–21, 39–59, 87–107, 111–131, 149–169, 189–209, 218–238, and 246–266; these read MTYF…FLPI, QGLA…VMYF, WLII…KDFI, LRSA…LWWV, ALFL…RSGI, FLMS…KLAL, FLGT…HFFL, and MTPF…WLAL.

This sequence belongs to the UppP family.

Its subcellular location is the cell inner membrane. The enzyme catalyses di-trans,octa-cis-undecaprenyl diphosphate + H2O = di-trans,octa-cis-undecaprenyl phosphate + phosphate + H(+). Catalyzes the dephosphorylation of undecaprenyl diphosphate (UPP). Confers resistance to bacitracin. The polypeptide is Undecaprenyl-diphosphatase (Aliivibrio salmonicida (strain LFI1238) (Vibrio salmonicida (strain LFI1238))).